Here is a 299-residue protein sequence, read N- to C-terminus: Coenzyme PQQ synthesis protein B (299 aa).

This sequence belongs to the PqqB family.

It functions in the pathway cofactor biosynthesis; pyrroloquinoline quinone biosynthesis. In terms of biological role, may be involved in the transport of PQQ or its precursor to the periplasm. This is Coenzyme PQQ synthesis protein B from Methylobacterium radiotolerans (strain ATCC 27329 / DSM 1819 / JCM 2831 / NBRC 15690 / NCIMB 10815 / 0-1).